Here is a 324-residue protein sequence, read N- to C-terminus: Adenine deaminase (324 aa).

Zn(2+)-binding residues include histidine 11, histidine 13, and histidine 189. Glutamate 192 acts as the Proton donor in catalysis. Aspartate 270 provides a ligand contact to Zn(2+). Aspartate 271 is a substrate binding site.

The protein belongs to the metallo-dependent hydrolases superfamily. Adenosine and AMP deaminases family. Adenine deaminase type 2 subfamily. It depends on Zn(2+) as a cofactor.

The enzyme catalyses adenine + H2O + H(+) = hypoxanthine + NH4(+). Functionally, catalyzes the hydrolytic deamination of adenine to hypoxanthine. Plays an important role in the purine salvage pathway and in nitrogen catabolism. This chain is Adenine deaminase, found in Sinorhizobium fredii (strain NBRC 101917 / NGR234).